A 102-amino-acid chain; its full sequence is Thioredoxin (102 aa).

Residues 2–102 (VTEIKSLKQL…KAKIVQLVSQ (101 aa)) form the Thioredoxin domain. Cysteine 30 and cysteine 33 form a disulfide bridge.

The protein belongs to the thioredoxin family.

Participates in various redox reactions through the reversible oxidation of its active center dithiol to a disulfide and catalyzes dithiol-disulfide exchange reactions. The chain is Thioredoxin (trxA) from Mycoplasma pneumoniae (strain ATCC 29342 / M129 / Subtype 1) (Mycoplasmoides pneumoniae).